The primary structure comprises 185 residues: Ribosome-recycling factor (185 aa).

Belongs to the RRF family.

It is found in the cytoplasm. Responsible for the release of ribosomes from messenger RNA at the termination of protein biosynthesis. May increase the efficiency of translation by recycling ribosomes from one round of translation to another. The sequence is that of Ribosome-recycling factor from Shewanella oneidensis (strain ATCC 700550 / JCM 31522 / CIP 106686 / LMG 19005 / NCIMB 14063 / MR-1).